The following is a 542-amino-acid chain: Protein lin-9 homolog (542 aa).

Ala2 is subject to N-acetylalanine. A Glycyl lysine isopeptide (Lys-Gly) (interchain with G-Cter in SUMO2) cross-link involves residue Lys21. Phosphoserine occurs at positions 65 and 95. A phosphothreonine mark is found at Thr96 and Thr304. 2 positions are modified to phosphoserine: Ser309 and Ser321.

The protein belongs to the lin-9 family. Component of the DREAM complex (also named LINC complex) at least composed of E2F4, E2F5, LIN9, LIN37, LIN52, LIN54, MYBL1, MYBL2, RBL1, RBL2, RBBP4, TFDP1 and TFDP2. The complex exists in quiescent cells where it represses cell cycle-dependent genes. It dissociates in S phase when LIN9, LIN37, LIN52 and LIN54 form a subcomplex that binds to MYBL2. Interacts with RB1.

The protein resides in the nucleus. Its subcellular location is the nucleoplasm. In terms of biological role, acts as a tumor suppressor. Inhibits DNA synthesis. Its ability to inhibit oncogenic transformation is mediated through its association with RB1. Plays a role in the expression of genes required for the G1/S transition. In Mus musculus (Mouse), this protein is Protein lin-9 homolog (Lin9).